The primary structure comprises 482 residues: Ras GTPase-activating protein-binding protein 2 (482 aa).

In terms of domain architecture, NTF2 spans 11-133 (VGREFVRQYY…FYVHNDMFRY (123 aa)). Positions 140–158 (DSEPELDEESEDEVEEEQE) are enriched in acidic residues. Disordered stretches follow at residues 140–171 (DSEP…QENA) and 187–318 (EPLE…EQND). Residues serine 141, serine 149, and serine 225 each carry the phosphoserine modification. The segment at 142–220 (EPELDEESED…PQVEEKNLEE (79 aa)) is acidic disordered region. Over residues 191 to 225 (ESSHEPEPEPESETKTEELKPQVEEKNLEELEEKS) the composition is skewed to basic and acidic residues. Threonine 227 is modified (phosphothreonine). Serine 235 bears the Phosphoserine mark. Residues 247–264 (ASVTSKNLPPSGTVSSSG) show a composition bias toward polar residues. Lysine 281 is covalently cross-linked (Glycyl lysine isopeptide (Lys-Gly) (interchain with G-Cter in SUMO2)). The span at 290 to 300 (RVREQRPRERP) shows a compositional bias: basic and acidic residues. The region spanning 331–409 (HQLFVGNLPH…VRLNVEEKKT (79 aa)) is the RRM domain. Lysine 392 is modified (N6-succinyllysine). Residues 404–476 (VEEKKTRAAR…GRGTGQMEGR (73 aa)) form an RG-rich region region. Residues 408 to 432 (KTRAARERETRGGGDDRRDIRRNDR) show a composition bias toward basic and acidic residues. The segment at 408–482 (KTRAARERET…MEGRFTGQRR (75 aa)) is disordered. The span at 433–445 (GPGGPRGIVGGGM) shows a compositional bias: gly residues. Arginine 457 is subject to Omega-N-methylarginine. Position 466 is a phosphoserine (serine 466). Arginine 468 is modified (omega-N-methylarginine).

In terms of assembly, forms homooligomers. Forms heterodimers with G3BP1. Interacts with NFKBIA (via N-terminus). Interacts (via NTF2 domain) with USP10; inhibiting stress granule formation. Interacts (via NTF2 domain) with CAPRIN1; promoting stress granule formation. Associates (via RG-rich region) with 40S ribosome subunits. Interacts with PABPC1. As to quaternary structure, (Microbial infection) Interacts with non-structural protein 3 (via C-terminus) of Sindbis virus and Semliki forest virus; this interaction inhibits the formation of host stress granules on viral mRNAs and the nsp3-G3BP2 complexes bind viral RNAs and probably orchestrate the assembly of viral replication complexes. In terms of processing, (Microbial infection) Cleaved by foot-and-mouth disease virus leader protease; this cleavage suppresses the formation of cytoplasmic stress granules.

Its subcellular location is the cytoplasm. The protein localises to the stress granule. With respect to regulation, under physiological conditions, G3BP2 adopts a compact state that is stabilized by intramolecular interactions between the RG-rich and the acidic regions that inhibit phase separation. Upon stress, polysomes disassemble and mRNAs are released in an unfolded protein-free state. Binding of unfolded mRNA to G3BP2 outcompetes the intramolecular interactions and RNA-bound G3BP2 adopts an expanded conformation in which the RG-rich region becomes exposed to engage in protein-protein and protein-RNA interactions, allowing physical cross-linking of RNA molecules to form protein-RNA condensates, leading to liquid-liquid phase separation (LLPS). Functionally, scaffold protein that plays an essential role in cytoplasmic stress granule formation which acts as a platform for antiviral signaling. Plays an essential role in stress granule formation. Stress granules are membraneless compartments that store mRNAs and proteins, such as stalled translation pre-initiation complexes, in response to stress. Promotes formation of stress granules phase-separated membraneless compartment by undergoing liquid-liquid phase separation (LLPS) upon unfolded RNA-binding: functions as a molecular switch that triggers RNA-dependent LLPS in response to a rise in intracellular free RNA concentrations. The protein is Ras GTPase-activating protein-binding protein 2 of Homo sapiens (Human).